The sequence spans 872 residues: Bifunctional heparan sulfate N-deacetylase/N-sulfotransferase 4 (872 aa).

The Cytoplasmic segment spans residues 1 to 13; that stretch reads MNLILKFRRSFRT. Residues 14–34 form a helical; Signal-anchor for type II membrane protein membrane-spanning segment; it reads LIVLLATFCLVSILISAYFLY. The Lumenal segment spans residues 35–872; it reads SGYKQEMTLI…WLRQELQKVR (838 aa). The tract at residues 36–588 is heparan sulfate N-deacetylase 4; it reads GYKQEMTLIE…KRHKDIWSRE (553 aa). Residues Asn226, Asn341, and Asn391 are each glycosylated (N-linked (GlcNAc...) asparagine). The tract at residues 589–872 is heparan sulfate N-sulfotransferase 4; that stretch reads KTCDHLPKFL…WLRQELQKVR (284 aa). Lys604 acts as the For sulfotransferase activity in catalysis. 604 to 608 contributes to the 3'-phosphoadenylyl sulfate binding site; the sequence is KTGTT. N-linked (GlcNAc...) asparagine glycosylation occurs at Asn657. Ser702 provides a ligand contact to 3'-phosphoadenylyl sulfate. N-linked (GlcNAc...) asparagine glycosylation is present at Asn793. An intrachain disulfide couples Cys808 to Cys818. 823–827 serves as a coordination point for 3'-phosphoadenylyl sulfate; the sequence is KGRKY.

It belongs to the sulfotransferase 1 family. NDST subfamily. In terms of assembly, monomer. Expressed at low level in brain and throughout embryogenesis. Not expressed in other tissues.

Its subcellular location is the golgi apparatus membrane. It catalyses the reaction alpha-D-glucosaminyl-[heparan sulfate](n) + 3'-phosphoadenylyl sulfate = N-sulfo-alpha-D-glucosaminyl-[heparan sulfate](n) + adenosine 3',5'-bisphosphate + 2 H(+). Its pathway is glycan metabolism; heparan sulfate biosynthesis. It functions in the pathway glycan metabolism; heparin biosynthesis. Functionally, essential bifunctional enzyme that catalyzes both the N-deacetylation and the N-sulfation of glucosamine (GlcNAc) of the glycosaminoglycan in heparan sulfate. Modifies the GlcNAc-GlcA disaccharide repeating sugar backbone to make N-sulfated heparosan, a prerequisite substrate for later modifications in heparin biosynthesis. Has low deacetylase activity but high sulfotransferase activity. The polypeptide is Bifunctional heparan sulfate N-deacetylase/N-sulfotransferase 4 (Ndst4) (Mus musculus (Mouse)).